We begin with the raw amino-acid sequence, 319 residues long: Protoheme IX farnesyltransferase (319 aa).

The next 9 membrane-spanning stretches (helical) occupy residues 34-54, 55-75, 95-115, 119-139, 155-175, 182-202, 221-241, 244-264, and 291-311; these read VMSL…GHIN, PVLG…SGAL, IPAG…LSGF, ILGL…IFFY, IVIG…CVTG, VVLF…LALF, VPTT…IGVV, FMGF…VIFV, and IFYL…AVLM.

Belongs to the UbiA prenyltransferase family. Protoheme IX farnesyltransferase subfamily.

Its subcellular location is the cell inner membrane. The catalysed reaction is heme b + (2E,6E)-farnesyl diphosphate + H2O = Fe(II)-heme o + diphosphate. It participates in porphyrin-containing compound metabolism; heme O biosynthesis; heme O from protoheme: step 1/1. In terms of biological role, converts heme B (protoheme IX) to heme O by substitution of the vinyl group on carbon 2 of heme B porphyrin ring with a hydroxyethyl farnesyl side group. The polypeptide is Protoheme IX farnesyltransferase (Rhizobium rhizogenes (strain K84 / ATCC BAA-868) (Agrobacterium radiobacter)).